We begin with the raw amino-acid sequence, 247 residues long: Protein eak-4 (247 aa).

A lipid anchor (N-myristoyl glycine) is attached at Gly2.

In terms of tissue distribution, expressed in the 2 embryonic head hypodermal cells XXXL/R.

The protein localises to the cell membrane. In terms of biological role, together with eak-6 and sdf-9, negatively regulates dauer larva formation downstream of the insulin-like receptor daf-2 and in parallel with age-1, pdk-1 and akt-1. The polypeptide is Protein eak-4 (Caenorhabditis elegans).